The chain runs to 54 residues: Large ribosomal subunit protein bL33A (54 aa).

The protein belongs to the bacterial ribosomal protein bL33 family.

In Mycolicibacterium gilvum (strain PYR-GCK) (Mycobacterium gilvum (strain PYR-GCK)), this protein is Large ribosomal subunit protein bL33A.